The following is a 140-amino-acid chain: FAD synthase (140 aa).

ATP contacts are provided by residues 10-11, 15-18, and asparagine 93; these read TF and HPGH.

It belongs to the archaeal FAD synthase family. Homodimer. The cofactor is a divalent metal cation.

It carries out the reaction FMN + ATP + H(+) = FAD + diphosphate. It functions in the pathway cofactor biosynthesis; FAD biosynthesis; FAD from FMN: step 1/1. Catalyzes the transfer of the AMP portion of ATP to flavin mononucleotide (FMN) to produce flavin adenine dinucleotide (FAD) coenzyme. The protein is FAD synthase of Methanocella arvoryzae (strain DSM 22066 / NBRC 105507 / MRE50).